The sequence spans 314 residues: Methionyl-tRNA formyltransferase (314 aa).

113 to 116 (SLLP) contributes to the (6S)-5,6,7,8-tetrahydrofolate binding site.

The protein belongs to the Fmt family.

It catalyses the reaction L-methionyl-tRNA(fMet) + (6R)-10-formyltetrahydrofolate = N-formyl-L-methionyl-tRNA(fMet) + (6S)-5,6,7,8-tetrahydrofolate + H(+). Its function is as follows. Attaches a formyl group to the free amino group of methionyl-tRNA(fMet). The formyl group appears to play a dual role in the initiator identity of N-formylmethionyl-tRNA by promoting its recognition by IF2 and preventing the misappropriation of this tRNA by the elongation apparatus. In Pseudomonas aeruginosa (strain LESB58), this protein is Methionyl-tRNA formyltransferase.